Consider the following 319-residue polypeptide: Beta-ketoacyl-[acyl-carrier-protein] synthase III (319 aa).

Catalysis depends on residues cysteine 112 and histidine 246. The segment at 247 to 251 (QANKR) is ACP-binding. Asparagine 276 is a catalytic residue.

The protein belongs to the thiolase-like superfamily. FabH family. Homodimer.

It localises to the cytoplasm. It carries out the reaction malonyl-[ACP] + acetyl-CoA + H(+) = 3-oxobutanoyl-[ACP] + CO2 + CoA. It functions in the pathway lipid metabolism; fatty acid biosynthesis. Catalyzes the condensation reaction of fatty acid synthesis by the addition to an acyl acceptor of two carbons from malonyl-ACP. Catalyzes the first condensation reaction which initiates fatty acid synthesis and may therefore play a role in governing the total rate of fatty acid production. Possesses both acetoacetyl-ACP synthase and acetyl transacylase activities. Its substrate specificity determines the biosynthesis of branched-chain and/or straight-chain of fatty acids. This chain is Beta-ketoacyl-[acyl-carrier-protein] synthase III, found in Psychromonas ingrahamii (strain DSM 17664 / CCUG 51855 / 37).